A 313-amino-acid polypeptide reads, in one-letter code: Olfactory receptor 8C8 (313 aa).

The Extracellular segment spans residues 1-27 (MMQITMENKSSVSEFILMGLTDQPELQ). Asn8 is a glycosylation site (N-linked (GlcNAc...) asparagine). A helical membrane pass occupies residues 28–48 (LPLFVLFLMNYTATVMGNLTL). The Cytoplasmic segment spans residues 49-59 (MNLICLNSNLH). A helical transmembrane segment spans residues 60-80 (TPMYFFLFNLSFIDFCYSMVF). Residues 81-96 (TPKMLMSFILEKNTIS) lie on the Extracellular side of the membrane. Residues 97 to 117 (FGGCMAQLFFFLFFVNSESYV) form a helical membrane-spanning segment. A disulfide bond links Cys100 and Cys192. The Cytoplasmic segment spans residues 118-136 (LTAMAYDRYVAICKPLTYK). The chain crosses the membrane as a helical span at residues 137-157 (VIMSPKICCLLIFSSYLMGFA). The Extracellular segment spans residues 158–208 (SAMAHTGCMIRLSFCDSNIINHYMCDIFPLLPLSCSSTYVNELMSSVVVGS). The helical transmembrane segment at 209-229 (AIILCCLIILISYAMILFNII) threads the bilayer. Residues 230-239 (HMSSGKGWSK) lie on the Cytoplasmic side of the membrane. Residues 240 to 260 (ALGTCGSHIITVSLFYGSGLL) form a helical membrane-spanning segment. At 261–274 (AYVKPSSAKTVGQG) the chain is on the extracellular side. A helical membrane pass occupies residues 275–295 (KFFSVFYTLLVPMLNPLIYSL). Residues 296–313 (RNKDVKLAVKKTWKRITS) lie on the Cytoplasmic side of the membrane.

It belongs to the G-protein coupled receptor 1 family. In terms of tissue distribution, expressed in neurons in the olfactory epithelium.

The protein localises to the cell membrane. In terms of biological role, potential odorant receptor. This chain is Olfactory receptor 8C8, found in Mus musculus (Mouse).